The following is a 375-amino-acid chain: Histidine biosynthesis bifunctional protein HisB (375 aa).

Residues 1 to 168 (MTPILFVDRD…GIAHELADAP (168 aa)) form a histidinol-phosphatase region. Residue D8 is the Nucleophile of the active site. Positions 8, 10, and 128 each coordinate Mg(2+). D10 functions as the Proton donor in the catalytic mechanism. The tract at residues 169–375 (RRAVVQRNTK…TALPSTKGAL (207 aa)) is imidazoleglycerol-phosphate dehydratase.

In the N-terminal section; belongs to the histidinol-phosphatase family. The protein in the C-terminal section; belongs to the imidazoleglycerol-phosphate dehydratase family. Requires Mg(2+) as cofactor.

Its subcellular location is the cytoplasm. It catalyses the reaction D-erythro-1-(imidazol-4-yl)glycerol 3-phosphate = 3-(imidazol-4-yl)-2-oxopropyl phosphate + H2O. The catalysed reaction is L-histidinol phosphate + H2O = L-histidinol + phosphate. It participates in amino-acid biosynthesis; L-histidine biosynthesis; L-histidine from 5-phospho-alpha-D-ribose 1-diphosphate: step 6/9. It functions in the pathway amino-acid biosynthesis; L-histidine biosynthesis; L-histidine from 5-phospho-alpha-D-ribose 1-diphosphate: step 8/9. The protein is Histidine biosynthesis bifunctional protein HisB of Xanthomonas campestris pv. campestris (strain 8004).